Consider the following 39-residue polypeptide: Natriuretic peptide PaNP-d (39 aa).

Positions 1–8 (SGSKTAEI) are excised as a propeptide. The disordered stretch occupies residues 1–39 (SGSKTAEIDDGCFGLPLDPIGSTSGMGCRSVPKPIPGGS). A disulfide bond links Cys12 and Cys28.

Belongs to the natriuretic peptide family. As to expression, expressed by the venom gland.

It is found in the secreted. Its function is as follows. Snake venom natriuretic peptide that targets both NPR1 and NPR2. Exhibits hypotensive and vasodepressor activities. The sequence is that of Natriuretic peptide PaNP-d from Pseudechis australis (Mulga snake).